We begin with the raw amino-acid sequence, 155 residues long: Anaerobic ribonucleoside-triphosphate reductase-activating protein (155 aa).

[4Fe-4S] cluster is bound by residues C26, C30, and C33. S-adenosyl-L-methionine-binding positions include 32-34 and G74; that span reads GCY.

The protein belongs to the organic radical-activating enzymes family. Forms a tetramer composed of two NrdD and two NrdG subunits. [4Fe-4S] cluster serves as cofactor.

The protein localises to the cytoplasm. The catalysed reaction is glycyl-[protein] + reduced [flavodoxin] + S-adenosyl-L-methionine = glycin-2-yl radical-[protein] + semiquinone [flavodoxin] + 5'-deoxyadenosine + L-methionine + H(+). Activation of anaerobic ribonucleoside-triphosphate reductase under anaerobic conditions by generation of an organic free radical, using S-adenosylmethionine and reduced flavodoxin as cosubstrates to produce 5'-deoxy-adenosine. The sequence is that of Anaerobic ribonucleoside-triphosphate reductase-activating protein (nrdG) from Vibrio cholerae serotype O1 (strain ATCC 39315 / El Tor Inaba N16961).